Here is a 70-residue protein sequence, read N- to C-terminus: DNA gyrase inhibitor YacG (70 aa).

4 residues coordinate Zn(2+): cysteine 9, cysteine 12, cysteine 28, and cysteine 32. The disordered stretch occupies residues 43–70 (ESRKIPGSSIDPESIVTSNNKQDNVDEQ).

It belongs to the DNA gyrase inhibitor YacG family. Interacts with GyrB. It depends on Zn(2+) as a cofactor.

In terms of biological role, inhibits all the catalytic activities of DNA gyrase by preventing its interaction with DNA. Acts by binding directly to the C-terminal domain of GyrB, which probably disrupts DNA binding by the gyrase. This Legionella pneumophila (strain Lens) protein is DNA gyrase inhibitor YacG.